We begin with the raw amino-acid sequence, 206 residues long: Small ribosomal subunit protein uS4 (206 aa).

One can recognise an S4 RNA-binding domain in the interval 96 to 158 (SRLDNVVYRM…AKGQLRIKGA (63 aa)).

The protein belongs to the universal ribosomal protein uS4 family. Part of the 30S ribosomal subunit. Contacts protein S5. The interaction surface between S4 and S5 is involved in control of translational fidelity.

Its function is as follows. One of the primary rRNA binding proteins, it binds directly to 16S rRNA where it nucleates assembly of the body of the 30S subunit. Functionally, with S5 and S12 plays an important role in translational accuracy. The polypeptide is Small ribosomal subunit protein uS4 (Coxiella burnetii (strain CbuG_Q212) (Coxiella burnetii (strain Q212))).